Consider the following 183-residue polypeptide: uncharacterized protein (183 aa).

Disordered stretches follow at residues 1 to 44 (MPFY…VMTA), 68 to 137 (GRAG…LGLR), and 163 to 183 (RDDPRESEVRPVTGVQTVWPE).

This is an uncharacterized protein from Dryophytes versicolor (chameleon treefrog).